The primary structure comprises 421 residues: MALVVQKYGGSSVADAERIRRVAERIVATKKQGNDVVVVVSAMGDTTDDLLDLAQQVCPAPPPRELDMLLTAGERISNALVAMAIESLGAHARSFTGSQAGVITTGTHGNAKIIDVTPGRLQTALEEGRVVLVAGFQGVSQDTKDVTTLGRGGSDTTAVAMAAALGADVCEIYTDVDGIFSADPRIVRNARKLDTVTFEEMLEMAACGAKVLMLRCVEYARRHNIPVHVRSSYSDRPGTVVVGSIKDVPMEDPILTGVAHDRSEAKVTIVGLPDIPGYAAKVFRAVADADVNIDMVLQNVSKVEDGKTDITFTCSRDVGPAAVEKLDSLRNEIGFSQLLYDDHIGKVSLIGAGMRSHPGVTATFCEALAAVGVNIELISTSEIRISVLCRDTELDKAVVALHEAFGLGGDEEATVYAGTGR.

Residue 7 to 10 (KYGG) participates in ATP binding. Substrate is bound at residue 25–30 (RIVATK). Residue Ser41 participates in ATP binding. Substrate contacts are provided by residues 45-49 (DTTDD), Glu74, 125-126 (LE), 151-154 (RGGS), and Ser154. ATP is bound by residues 174–175 (TD), 180–185 (FSADPR), and Lys210. ACT domains lie at 267–348 (VTIV…GKVS) and 349–421 (LIGA…GTGR). Substrate-binding positions include Asp274, 274–279 (DIPGYA), 292–294 (NID), Gln298, 360–361 (VT), 374–375 (NI), and 381–382 (SE).

The protein belongs to the aspartokinase family. As to quaternary structure, heterotetramer consisting of 2 isoforms Alpha (catalytic and regulation) and of a homodimer of 2 isoforms Beta (regulation).

The enzyme catalyses L-aspartate + ATP = 4-phospho-L-aspartate + ADP. Its pathway is amino-acid biosynthesis; L-lysine biosynthesis via DAP pathway; (S)-tetrahydrodipicolinate from L-aspartate: step 1/4. The protein operates within amino-acid biosynthesis; L-methionine biosynthesis via de novo pathway; L-homoserine from L-aspartate: step 1/3. It functions in the pathway amino-acid biosynthesis; L-threonine biosynthesis; L-threonine from L-aspartate: step 1/5. With respect to regulation, feedback inhibition by lysine and threonine. Its function is as follows. Catalyzes the phosphorylation of the beta-carboxyl group of aspartic acid with ATP to yield 4-phospho-L-aspartate, which is involved in the branched biosynthetic pathway leading to the biosynthesis of amino acids lysine, threonine, isoleucine and methionine. This chain is Aspartokinase (ask), found in Mycobacterium bovis (strain ATCC BAA-935 / AF2122/97).